The chain runs to 461 residues: Probable tubulin polyglutamylase TTLL9 (461 aa).

The span at 1–10 shows a compositional bias: polar residues; the sequence is MSRQKSQTSK. The disordered stretch occupies residues 1–20; sequence MSRQKSQTSKGHGASKGKER. In terms of domain architecture, TTL spans 22 to 402; that stretch reads QRTLIRFKTT…EARLTGKEKR (381 aa). Residues Lys149 and 155–156 each bind ATP; that span reads QG. Gln155 is a binding site for a protein. Residues 186 to 197 are compositionally biased toward polar residues; it reads QATRANVNPSGS. Positions 186-208 are disordered; the sequence is QATRANVNPSGSHDTRSSDDQKD. Positions 198–208 are enriched in basic and acidic residues; that stretch reads HDTRSSDDQKD. ATP is bound by residues 218–221 and 231–233; these read QRYV and KFD. Residue Arg257 participates in L-glutamate binding. Position 276 to 277 (276 to 277) interacts with ATP; it reads TN. Lys294 lines the L-glutamate pocket. Mg(2+)-binding residues include Asp348, Glu361, and Asn363. Lys379 lines the L-glutamate pocket.

The protein belongs to the tubulin--tyrosine ligase family. The cofactor is Mg(2+).

The protein localises to the cytoplasm. Its subcellular location is the cytoskeleton. It is found in the cilium basal body. The protein resides in the flagellum axoneme. The catalysed reaction is (L-glutamyl)(n)-gamma-L-glutamyl-L-glutamyl-[protein] + L-glutamate + ATP = (L-glutamyl)(n+1)-gamma-L-glutamyl-L-glutamyl-[protein] + ADP + phosphate + H(+). Probable tubulin polyglutamylase that generates side chains of glutamate on the gamma-carboxyl group of specific glutamate residues within the C-terminal tail of target proteins. Similar to TTLL1, may acquire enzymatic activity only in complex with other proteins as it is most likely lacking domains important for autonomous activity. Mediates tubulin polyglutamylation which induces establishment of microtubule heterogeneity in sperm flagella, thereby playing a role in normal motile flagella axoneme structure and sperm flagella beating pattern. This chain is Probable tubulin polyglutamylase TTLL9 (Ttll9), found in Rattus norvegicus (Rat).